Reading from the N-terminus, the 634-residue chain is MSHTPKSAGSSHAPANSQTALVIGAIGVVFGDIGTSPLYTLKEAFSPHYGLTPDHDTVLGILSLVFWALMLVVTLKYVTVIMRADNDGEGGIMALTALAQRTLPGGSRSMYVVGILGIFGASLFFGDGVITPAISVLSAVEGLEVAAPRLEPFVVPITLVVLGMLFLAQRFGTERVGKAFGPITLLWFFALGAIGVYNMARAPEVLHALNPWWGVRFFAQHNWHAVFVLGAVVLAVTGGEALYADMGHFGAKAIRRSWQFVVLPMLTLTYLGQGALMLRNPAAVSNPFYEAVPEWALYPMIVLATAATVIASQALITGAYSVASQAMQLGYIPRMHIRHTSHSTIGQIYVPAVNWCLLALVAVAVIGFGDSASLATAYGVSVTGTMLITTVLMIIYARANPRVPAPLLWLFALVFLAVDCAFFYANIIKFLDGAWFPLLLGLILFTLMRTWRRGRKLLHDEIRKDGIKLDTFLPGLMLAPPVRVPGTAVFLTADPMVVPHALMHNLKHNKVLHERNVFLTVETLQVPYAAAGKRLKIDAIGDEFYRVHVRFGFMETPDVPLALMRSCDQGGIYFDPMDTTYFASRETIVASANRGMPIWRDKLFALMHRNAAPATGFFRIPGNRLVELGAQVEI.

12 consecutive transmembrane segments (helical) span residues 21–41, 58–78, 110–130, 152–172, 179–199, 223–243, 258–278, 296–316, 348–368, 377–397, 403–423, and 427–447; these read LVIG…LYTL, VLGI…LKYV, MYVV…DGVI, PFVV…QRFG, AFGP…VYNM, WHAV…EALY, WQFV…ALML, ALYP…QALI, IYVP…VIGF, AYGV…IIYA, VPAP…CAFF, and IIKF…LFTL.

The protein belongs to the HAK/KUP transporter (TC 2.A.72) family.

The protein resides in the cell inner membrane. The enzyme catalyses K(+)(in) + H(+)(in) = K(+)(out) + H(+)(out). Its function is as follows. Transport of potassium into the cell. Likely operates as a K(+):H(+) symporter. The sequence is that of Probable potassium transport system protein Kup from Xanthomonas euvesicatoria pv. vesicatoria (strain 85-10) (Xanthomonas campestris pv. vesicatoria).